An 801-amino-acid chain; its full sequence is Xaa-Pro dipeptidyl-peptidase (801 aa).

Active-site charge relay system residues include serine 371, aspartate 491, and histidine 522.

The protein belongs to the peptidase S15 family. Homodimer.

Its subcellular location is the cytoplasm. It catalyses the reaction Hydrolyzes Xaa-Pro-|- bonds to release unblocked, N-terminal dipeptides from substrates including Ala-Pro-|-p-nitroanilide and (sequentially) Tyr-Pro-|-Phe-Pro-|-Gly-Pro-|-Ile.. In terms of biological role, removes N-terminal dipeptides sequentially from polypeptides having unsubstituted N-termini provided that the penultimate residue is proline. This chain is Xaa-Pro dipeptidyl-peptidase, found in Ligilactobacillus salivarius (strain UCC118) (Lactobacillus salivarius).